The primary structure comprises 185 residues: Meiotic expression up-regulated protein 31 (185 aa).

This chain is Meiotic expression up-regulated protein 31 (meu31), found in Schizosaccharomyces pombe (strain 972 / ATCC 24843) (Fission yeast).